The sequence spans 119 residues: Large ribosomal subunit protein bL20 (119 aa).

The protein belongs to the bacterial ribosomal protein bL20 family.

Binds directly to 23S ribosomal RNA and is necessary for the in vitro assembly process of the 50S ribosomal subunit. It is not involved in the protein synthesizing functions of that subunit. The protein is Large ribosomal subunit protein bL20 of Bradyrhizobium diazoefficiens (strain JCM 10833 / BCRC 13528 / IAM 13628 / NBRC 14792 / USDA 110).